A 423-amino-acid chain; its full sequence is TNF receptor-associated factor family protein DDB_G0277243 (423 aa).

The RING-type; degenerate zinc-finger motif lies at 20–66 (CSICVDPVLNSLPLEQHQALSCKNGHLLCQACWGKQLALRKECCICK). 2 TRAF-type zinc fingers span residues 124–179 (SHLR…NDMP) and 180–237 (THIE…CYLS). One can recognise an MATH domain in the interval 287 to 411 (RYKGNWTIEN…DGKLTINIDV (125 aa)).

It belongs to the TNF receptor-associated factor family. A subfamily.

It localises to the cytoplasm. Functionally, probable adapter protein and signal transducer that links members of the tumor necrosis factor receptor family to different signaling pathways by association with the receptor cytoplasmic domain and kinases. This is TNF receptor-associated factor family protein DDB_G0277243 from Dictyostelium discoideum (Social amoeba).